The sequence spans 1601 residues: Ras guanine nucleotide exchange factor glfB (1601 aa).

Disordered regions lie at residues 43-140 (PLLA…KEWD), 188-256 (DLLI…TTTT), 310-461 (SPQR…APDS), and 475-630 (LTTT…VKKG). Pro residues predominate over residues 45–55 (LAPPAPPPPPT). Residues 57 to 69 (QEINIGSGNSTFI) are compositionally biased toward polar residues. A compositionally biased stretch (low complexity) spans 70 to 126 (SSNNNNSNNNNNNNSNNNNNNNLNNSNNNNNNLNSNNNNNNNNNNNNNNGNNNNNSN). Position 197 is a phosphoserine (Ser-197). Thr-201 is subject to Phosphothreonine. Low complexity-rich tracts occupy residues 211-256 (QQQQ…TTTT) and 310-330 (SPQRVTTTTTTTTPSTGGVVV). Positions 331-359 (ADEESDSSEEESDSSEEESDEYTDEESET) are enriched in acidic residues. Over residues 384-398 (PLTSVNSNDNTSSGT) the composition is skewed to polar residues. Low complexity-rich tracts occupy residues 435 to 458 (TAVAASSISATTNVTSAASTTTVA), 475 to 493 (LTTTTSATSSTTSATTQSI), and 500 to 520 (SQQRAAQSISTSSVTPAAITK). Residues 521–533 (PTKDAKDKKDPAK) are compositionally biased toward basic and acidic residues. Residues 558–577 (VPTGTSPPVSSSTSISSSTG) show a composition bias toward low complexity. The segment covering 578–596 (IKKDKVKLSKEEKDRIKKE) has biased composition (basic and acidic residues). Residues 649-836 (VRLTQLVLSN…LIIDNYVFLF (188 aa)) form the Rho-GAP domain. An N-terminal Ras-GEF domain is found at 851–983 (GKMIISEGSI…TINDFLKLPK (133 aa)). Residues 1021–1255 (SAMEIAEQCT…ADLSLKCEPP (235 aa)) form the Ras-GEF domain. Positions 1262-1601 (YNAPADIVDE…QESVPSTNAE (340 aa)) are N-terminal F-actin-binding domain. A disordered region spans residues 1443 to 1474 (SNVEKEKLSSSQEQQEQQEQKQQEQQQQQQEP). Residues 1465–1474 (QEQQQQQQEP) show a composition bias toward low complexity.

In terms of assembly, interacts with gpaB and rapA. Interacts directly with F-actin. In terms of processing, simultaneously phosphorylated at Ser-197 and Thr-201 after cAMP stimulation.

The protein localises to the cytoplasm. It is found in the cell cortex. It localises to the cytoskeleton. Its subcellular location is the cell projection. The protein resides in the filopodium. The protein localises to the lamellipodium. Functionally, gpaB-activated, rapA-specific guanine nucleotide exchange factor, involved in the regulation of the balance between Ras and Rap signaling at the leading edge of chemotaxing cells. Spatially localized activation of Rap and Ras induces F-actin polymerization at the leading edge of chemotaxing cells through the Rac, PI3K, and TORC2 pathways. Also acts as a key regulator of actin-driven membrane protrusions during processes such as phagocytosis and cytokinesis, possibly by modulating rapA signaling pathways. This Dictyostelium discoideum (Social amoeba) protein is Ras guanine nucleotide exchange factor glfB.